The chain runs to 239 residues: Carboxy-S-adenosyl-L-methionine synthase (239 aa).

S-adenosyl-L-methionine contacts are provided by residues Y36, 61-63 (GCS), 111-112 (DI), N126, and R193.

The protein belongs to the class I-like SAM-binding methyltransferase superfamily. Cx-SAM synthase family. Homodimer.

It carries out the reaction prephenate + S-adenosyl-L-methionine = carboxy-S-adenosyl-L-methionine + 3-phenylpyruvate + H2O. Functionally, catalyzes the conversion of S-adenosyl-L-methionine (SAM) to carboxy-S-adenosyl-L-methionine (Cx-SAM). This chain is Carboxy-S-adenosyl-L-methionine synthase, found in Nitratiruptor sp. (strain SB155-2).